The sequence spans 241 residues: Regulatory protein VirG (241 aa).

The 115-residue stretch at 3–117 folds into the Response regulatory domain; that stretch reads HVLVIDDDVA…EFLARIRVAL (115 aa). Residue Asp-52 is modified to 4-aspartylphosphate. Positions 129–229 form a DNA-binding region, ompR/PhoB-type; the sequence is RRSFYFADWT…ARGAGYFFDA (101 aa).

Post-translationally, phosphorylated by wide host range (WHR) VirA protein.

Its subcellular location is the cytoplasm. Functionally, virG is required for the positive regulation of at least two vir loci encoded by the Ri plasmid of A.rhizogenes. This is Regulatory protein VirG (virG) from Rhizobium rhizogenes (Agrobacterium rhizogenes).